We begin with the raw amino-acid sequence, 159 residues long: Protein Smg homolog (159 aa).

The protein belongs to the Smg family.

This chain is Protein Smg homolog, found in Dichelobacter nodosus (strain VCS1703A).